We begin with the raw amino-acid sequence, 277 residues long: Putative hydroxypyruvate isomerase (277 aa).

Catalysis depends on proton donor/acceptor residues E150 and E249.

It belongs to the hyi family.

It catalyses the reaction 3-hydroxypyruvate = 2-hydroxy-3-oxopropanoate. Its function is as follows. Catalyzes the reversible isomerization between hydroxypyruvate and 2-hydroxy-3-oxopropanoate (also termed tartronate semialdehyde). The polypeptide is Putative hydroxypyruvate isomerase (HYI) (Homo sapiens (Human)).